The primary structure comprises 305 residues: Homeobox protein ceh-23 (305 aa).

Disordered regions lie at residues 113-140 (ASCP…ERRR) and 262-305 (RRSK…KVLN). Over residues 120–135 (ASSQATVTLQVPSTGS) the composition is skewed to polar residues. Residues 211–270 (HRKARTIYGTTQTQQLEDMFKGQMYVVGAERENLAQRLGLSPSQVRIWFQNRRSKHRRKQ) constitute a DNA-binding region (homeobox). A compositionally biased stretch (acidic residues) spans 287 to 305 (GKDEEEDDEEDEDDVKVLN).

Belongs to the distal-less homeobox family.

Its subcellular location is the nucleus. Functionally, probable transcription factor. Required for differentiation of AIY interneurons, acting downstream of LIM/homeobox protein ttx-3. Modulates gene expression, acting downstream of AMP kinase aak-2/AMPK signaling. Modulates lifespan. In Caenorhabditis elegans, this protein is Homeobox protein ceh-23 (ceh-23).